The primary structure comprises 248 residues: Ubiquinone/menaquinone biosynthesis C-methyltransferase UbiE (248 aa).

Residues serine 68 and aspartate 92 each coordinate S-adenosyl-L-methionine.

The protein belongs to the class I-like SAM-binding methyltransferase superfamily. MenG/UbiE family.

The enzyme catalyses a 2-demethylmenaquinol + S-adenosyl-L-methionine = a menaquinol + S-adenosyl-L-homocysteine + H(+). The catalysed reaction is a 2-methoxy-6-(all-trans-polyprenyl)benzene-1,4-diol + S-adenosyl-L-methionine = a 5-methoxy-2-methyl-3-(all-trans-polyprenyl)benzene-1,4-diol + S-adenosyl-L-homocysteine + H(+). Its pathway is quinol/quinone metabolism; menaquinone biosynthesis; menaquinol from 1,4-dihydroxy-2-naphthoate: step 2/2. It participates in cofactor biosynthesis; ubiquinone biosynthesis. Its function is as follows. Methyltransferase required for the conversion of demethylmenaquinol (DMKH2) to menaquinol (MKH2) and the conversion of 2-polyprenyl-6-methoxy-1,4-benzoquinol (DDMQH2) to 2-polyprenyl-3-methyl-6-methoxy-1,4-benzoquinol (DMQH2). The protein is Ubiquinone/menaquinone biosynthesis C-methyltransferase UbiE of Rickettsia bellii (strain RML369-C).